Here is a 124-residue protein sequence, read N- to C-terminus: MAALGMLLSTGVRRLHCGSAARAGSQWRLRQGLAANPSGYGPLTELPDWSYADGRPAPPMKGQLRRKAQREKFARRVVLLSQEMDAGLQAWQLRQQEKLQEEKRKQQNALKPKGVLLQNPGPSQ.

The transit peptide at 1–23 (MAALGMLLSTGVRRLHCGSAARA) directs the protein to the mitochondrion. Residues 99-124 (LQEEKRKQQNALKPKGVLLQNPGPSQ) form a disordered region.

The protein belongs to the mitochondrion-specific ribosomal protein mL52 family. Component of the mitochondrial ribosome large subunit (39S) which comprises a 16S rRNA and about 50 distinct proteins.

It is found in the mitochondrion. In Bos taurus (Bovine), this protein is Large ribosomal subunit protein mL52 (MRPL52).